The primary structure comprises 58 residues: Protein translocase subunit SecE (58 aa).

A helical transmembrane segment spans residues 36–56 (ILLIGFIGFLMFAIMSLLPGV).

It belongs to the SecE/SEC61-gamma family. In terms of assembly, component of the Sec protein translocase complex. Heterotrimer consisting of SecY (alpha), SecG (beta) and SecE (gamma) subunits. The heterotrimers can form oligomers, although 1 heterotrimer is thought to be able to translocate proteins. Interacts with the ribosome. May interact with SecDF, and other proteins may be involved.

The protein localises to the cell membrane. Essential subunit of the Sec protein translocation channel SecYEG. Clamps together the 2 halves of SecY. May contact the channel plug during translocation. The sequence is that of Protein translocase subunit SecE from Halorubrum lacusprofundi (strain ATCC 49239 / DSM 5036 / JCM 8891 / ACAM 34).